Here is a 312-residue protein sequence, read N- to C-terminus: Ribosomal protein L11 methyltransferase (312 aa).

Residues Thr160, Gly181, Asp203, and Asn246 each coordinate S-adenosyl-L-methionine.

The protein belongs to the methyltransferase superfamily. PrmA family.

It is found in the cytoplasm. The catalysed reaction is L-lysyl-[protein] + 3 S-adenosyl-L-methionine = N(6),N(6),N(6)-trimethyl-L-lysyl-[protein] + 3 S-adenosyl-L-homocysteine + 3 H(+). Functionally, methylates ribosomal protein L11. The sequence is that of Ribosomal protein L11 methyltransferase from Staphylococcus saprophyticus subsp. saprophyticus (strain ATCC 15305 / DSM 20229 / NCIMB 8711 / NCTC 7292 / S-41).